A 769-amino-acid polypeptide reads, in one-letter code: Neutral alpha-glucosidase C (769 aa).

The active-site Nucleophile is the D366. Residue E369 is part of the active site. D442 functions as the Proton donor in the catalytic mechanism.

It belongs to the glycosyl hydrolase 31 family.

It catalyses the reaction Hydrolysis of terminal, non-reducing (1-&gt;4)-linked alpha-D-glucose residues with release of alpha-D-glucose.. Functionally, has alpha-glucosidase activity. This chain is Neutral alpha-glucosidase C (GANC), found in Macaca fascicularis (Crab-eating macaque).